We begin with the raw amino-acid sequence, 507 residues long: ATP synthase subunit alpha, chloroplastic (507 aa).

170-177 (GDRQTGKT) contacts ATP. Threonine 257 bears the Phosphothreonine mark.

This sequence belongs to the ATPase alpha/beta chains family. F-type ATPases have 2 components, CF(1) - the catalytic core - and CF(0) - the membrane proton channel. CF(1) has five subunits: alpha(3), beta(3), gamma(1), delta(1), epsilon(1). CF(0) has four main subunits: a, b, b' and c.

The protein localises to the plastid. It is found in the chloroplast thylakoid membrane. The enzyme catalyses ATP + H2O + 4 H(+)(in) = ADP + phosphate + 5 H(+)(out). Produces ATP from ADP in the presence of a proton gradient across the membrane. The alpha chain is a regulatory subunit. The chain is ATP synthase subunit alpha, chloroplastic from Draba nemorosa (Woodland whitlowgrass).